We begin with the raw amino-acid sequence, 334 residues long: Holliday junction branch migration complex subunit RuvB (334 aa).

The segment at 1-182 (MDERLVSSEL…FGVLSRLEYY (182 aa)) is large ATPase domain (RuvB-L). ATP-binding positions include Leu-21, Arg-22, Gly-63, Lys-66, Thr-67, Thr-68, 129-131 (EDF), Arg-172, Tyr-182, and Arg-219. Thr-67 is a Mg(2+) binding site. Residues 183–253 (TRDELSEIVI…VAVDALERLQ (71 aa)) form a small ATPAse domain (RuvB-S) region. The segment at 256-334 (KLGLDHIDRK…HFKMEVPNHD (79 aa)) is head domain (RuvB-H). The DNA site is built by Arg-311 and Arg-316.

Belongs to the RuvB family. In terms of assembly, homohexamer. Forms an RuvA(8)-RuvB(12)-Holliday junction (HJ) complex. HJ DNA is sandwiched between 2 RuvA tetramers; dsDNA enters through RuvA and exits via RuvB. An RuvB hexamer assembles on each DNA strand where it exits the tetramer. Each RuvB hexamer is contacted by two RuvA subunits (via domain III) on 2 adjacent RuvB subunits; this complex drives branch migration. In the full resolvosome a probable DNA-RuvA(4)-RuvB(12)-RuvC(2) complex forms which resolves the HJ.

It is found in the cytoplasm. The enzyme catalyses ATP + H2O = ADP + phosphate + H(+). The RuvA-RuvB-RuvC complex processes Holliday junction (HJ) DNA during genetic recombination and DNA repair, while the RuvA-RuvB complex plays an important role in the rescue of blocked DNA replication forks via replication fork reversal (RFR). RuvA specifically binds to HJ cruciform DNA, conferring on it an open structure. The RuvB hexamer acts as an ATP-dependent pump, pulling dsDNA into and through the RuvAB complex. RuvB forms 2 homohexamers on either side of HJ DNA bound by 1 or 2 RuvA tetramers; 4 subunits per hexamer contact DNA at a time. Coordinated motions by a converter formed by DNA-disengaged RuvB subunits stimulates ATP hydrolysis and nucleotide exchange. Immobilization of the converter enables RuvB to convert the ATP-contained energy into a lever motion, pulling 2 nucleotides of DNA out of the RuvA tetramer per ATP hydrolyzed, thus driving DNA branch migration. The RuvB motors rotate together with the DNA substrate, which together with the progressing nucleotide cycle form the mechanistic basis for DNA recombination by continuous HJ branch migration. Branch migration allows RuvC to scan DNA until it finds its consensus sequence, where it cleaves and resolves cruciform DNA. This Bacillus licheniformis (strain ATCC 14580 / DSM 13 / JCM 2505 / CCUG 7422 / NBRC 12200 / NCIMB 9375 / NCTC 10341 / NRRL NRS-1264 / Gibson 46) protein is Holliday junction branch migration complex subunit RuvB.